The following is an 89-amino-acid chain: U-scoloptoxin(12)-Er1a (89 aa).

The signal sequence occupies residues 1-22 (MKGLFLVVFLMWFVSQMNTEET).

This sequence belongs to the scoloptoxin-12 family. Post-translationally, contains 3 disulfide bonds. Expressed by the venom gland.

The protein localises to the secreted. The sequence is that of U-scoloptoxin(12)-Er1a from Ethmostigmus rubripes (Giant centipede).